Reading from the N-terminus, the 130-residue chain is Organ-specific protein P4 (130 aa).

2 consecutive repeat copies span residues 60–85 (HAKE…DNEI) and 86–111 (HANE…DNEI). The 2 X 26 AA tandem repeats stretch occupies residues 60–111 (HAKENKGAIGEFEPCPNASAYGDNEIHANENKGAIGEFETRPNGSAYGDNEI). A disordered region spans residues 79–130 (AYGDNEIHANENKGAIGEFETRPNGSAYGDNEIGAEFTDDFEPRPSMTKYNA).

It to organ specific protein S2. As to expression, expressed in pods.

In Pisum sativum (Garden pea), this protein is Organ-specific protein P4.